Reading from the N-terminus, the 128-residue chain is Large ribosomal subunit protein bL20 (128 aa).

This sequence belongs to the bacterial ribosomal protein bL20 family.

Its function is as follows. Binds directly to 23S ribosomal RNA and is necessary for the in vitro assembly process of the 50S ribosomal subunit. It is not involved in the protein synthesizing functions of that subunit. The polypeptide is Large ribosomal subunit protein bL20 (Micrococcus luteus (strain ATCC 4698 / DSM 20030 / JCM 1464 / CCM 169 / CCUG 5858 / IAM 1056 / NBRC 3333 / NCIMB 9278 / NCTC 2665 / VKM Ac-2230) (Micrococcus lysodeikticus)).